The primary structure comprises 1980 residues: Unconventional myosin-IXb (1980 aa).

S2 carries the post-translational modification N-acetylserine. One can recognise a Ras-associating domain in the interval A15 to A114. The region spanning A146–H954 is the Myosin motor domain. G239–T246 is a binding site for ATP. A disordered region spans residues G715–S736. Phosphoserine occurs at positions 717 and 718. An actin-binding region spans residues K845–S856. Positions L941–F1045 are neck or regulatory domain. IQ domains follow at residues L958–V978, K981–E1001, R1002–H1024, and Q1025–K1054. A Phosphoserine modification is found at S1046. Positions S1046 to E1980 are tail. 3 disordered regions span residues M1049 to T1281, S1302 to S1380, and D1394 to V1449. The segment covering T1097–G1106 has biased composition (polar residues). S1108, S1115, and S1177 each carry phosphoserine. Composition is skewed to basic and acidic residues over residues E1129–S1177 and E1186–G1195. S1220, S1222, S1229, S1237, S1243, and S1247 each carry phosphoserine. Residues R1235 to S1247 show a composition bias toward low complexity. Over residues D1250–E1265 the composition is skewed to basic and acidic residues. A phosphoserine mark is found at S1266, S1268, and S1304. Phosphothreonine is present on T1319. Phosphoserine is present on residues S1327, S1329, and S1337. The segment covering S1327–E1344 has biased composition (polar residues). The segment at G1592 to C1641 adopts a Phorbol-ester/DAG-type zinc-finger fold. Phosphoserine is present on S1649. The Rho-GAP domain maps to D1663 to Y1848. The interval A1699 to R1704 is interaction with RHOA. Positions I1841 to A1861 form a coiled coil. S1886 is subject to Phosphoserine. Positions V1891–K1923 are disordered. Positions D1918–D1948 form a coiled coil. S1932, S1952, and S1959 each carry phosphoserine. Residues K1937–D1953 show a composition bias toward basic and acidic residues. The tract at residues K1937–E1980 is disordered. T1965 carries the phosphothreonine modification. The segment covering L1969–E1980 has biased composition (basic and acidic residues).

It belongs to the TRAFAC class myosin-kinesin ATPase superfamily. Myosin family. Interacts (via IQ domains) with CALM. Interacts with RHOA. Interacts (via Rho-GAP domain) with ROBO1; this inhibits the interaction with RHOA and the stimulation of RHOA GTPase activity, and thereby increases the levels of active RHOA. As to expression, expressed in testis, lung, thymus, brain, liver, spleen and heart muscle. Detected in lung, testis, spleen and liver, and at reduced level in different brain regions (at protein level).

It is found in the cytoplasm. Its subcellular location is the cell cortex. The protein resides in the perinuclear region. It localises to the cytoskeleton. In terms of biological role, myosins are actin-based motor molecules with ATPase activity. Unconventional myosins serve in intracellular movements. Binds actin with high affinity both in the absence and presence of ATP and its mechanochemical activity is inhibited by calcium ions. Also acts as a GTPase activator for RHOA. Plays a role in the regulation of cell migration via its role as RHOA GTPase activator. This is regulated by its interaction with the SLIT2 receptor ROBO1; interaction with ROBO1 impairs interaction with RHOA and subsequent activation of RHOA GTPase activity, and thereby leads to increased levels of active, GTP-bound RHOA. The polypeptide is Unconventional myosin-IXb (Myo9b) (Rattus norvegicus (Rat)).